We begin with the raw amino-acid sequence, 1169 residues long: MSPNNQNEYEIIDATPSTSVSNDSNRYPFANEPTNALQNMDYKDYLKMSAGNVSEYPGSPEVFLSEQDAVKAAIDIVGKLLTGLGVPFVGPIVSLYTQLIDILWPSKQKSQWEIFMEQVEELINQKIAEYARNKALSELEGLGNNYQLYLTALEEWKENPNGSRALRDVRNRFEILDSLFTQYMPSFRVTNFEVPFLTVYTMAANLHLLLLRDASIFGEEWGLSTSTINNYYNRQMKLTAEYSDHCVKWYETGLAKLKGSSAKQWIDYNQFRREMTLTVLDVVALFSNYDTRTYPLATTAQLTREVYTDPLGAVDVPNIGSWYDKAPSFSEIEKAAIRPPHVFDYITGLTVYTKKRSFTSDRYMRYWAGHQISYKHIGTSSTFTQMYGTNQNLQSTSNFDFTNYDIYKTLSNGAVLLDIVYPGYTYTFFGMPETEFFMVNQLNNTRKTLTYKPASKDIIDRTRDSELELPPETSGQPNYESYSHRLGHITFIYSSSTSTYVPVFSWTHRSADLTNTVKSGEITQIPGGKSSTIGRNTYIIKGRGYTGGDLVALTDRIGSCEFQMIFPESQRFRIRIRYASNETSYISLYGLNQSGTLKFNQTYSNKNENDLTYNDFKYIEYPRVISVNASSNIQRLSIGIQTNTNLFILDRIEFIPVDETYEAETDLEAAKKAVNALFTNTKDGLQPGVTDYEVNQAANLVECLSDDLYPNEKRLLFDAVREAKRLSEARNLLQDPDFQEINGENGWTASTGIEVIEGDAVFKGRYLRLPGAREIDTETYPTYLYQKVEEGVLKPYTRYRLRGFVGSSQGLEIYTIRHQTNRIVKNVPDDLLPDVPPVNNDGRINRCSEQKYVNSRLEVENRSGEAHEFSIPIDTGELDYNENAGIWVGFKITDPEGYATLGNLELVEEGPLSGDALERLQKEEQQWKIQMTRRREETDRRYMASKQAVDRLYADYQDQQLNPNVEITDLTAAQDLIQSIPYVYNEMFPEIPGMNYTKFTELTDRLQQAWGLYDQRNAIPNGDYRNELSNWNTTSGVNVQQINHTSVLVIPNWNEQVSQKFTVQPNQRYVLRVTARKEGVGNGYVSIRDGGNQSETLTFSASDYDTNGMYDTQASNTNGYNTNSVYMIKPAISRKTVDISSVYNQMWIEISETEGTFYIESVELIVDVE.

The interval 1 to 26 (MSPNNQNEYEIIDATPSTSVSNDSNR) is disordered. Over residues 15 to 25 (TPSTSVSNDSN) the composition is skewed to polar residues.

Belongs to the delta endotoxin family.

Functionally, promotes colloidosmotic lysis by binding to the midgut epithelial cells of insects. Active on various scarabaeid beetles. This chain is Pesticidal crystal protein Cry8Ba (cry8Ba), found in Bacillus thuringiensis serovar kumamotoensis.